A 253-amino-acid polypeptide reads, in one-letter code: Major prion protein (253 aa).

Positions 1–22 (MANLGCWMLVLFVATWSDLGLC) are cleaved as a signal peptide. The interaction with GRB2, ERI3 and SYN1 stretch occupies residues 23 to 230 (KKRPKPGGWN…ESQAYYQRGS (208 aa)). Positions 26-108 (PKPGGWNTGG…WNKPSKPKTS (83 aa)) are disordered. 5 consecutive repeat copies span residues 51-59 (PQGGGGWGQ), 60-67 (PHGGGWGQ), 68-75 (PHGGGWGQ), 76-83 (PHGGGWGQ), and 84-91 (PHGGGWGQ). The 5 X 8 AA tandem repeats of P-H-G-G-G-W-G-Q stretch occupies residues 51 to 91 (PQGGGGWGQPHGGGWGQPHGGGWGQPHGGGWGQPHGGGWGQ). Residues 52–95 (QGGGGWGQPHGGGWGQPHGGGWGQPHGGGWGQPHGGGWGQGGGT) show a composition bias toward gly residues. Cu(2+)-binding residues include His-61, Gly-62, Gly-63, His-69, Gly-70, Gly-71, His-77, Gly-78, Gly-79, His-85, Gly-86, and Gly-87. Cys-179 and Cys-214 are oxidised to a cystine. N-linked (GlcNAc...) asparagine glycans are attached at residues Asn-181 and Asn-197. Residue Ser-230 is the site of GPI-anchor amidated serine attachment. The propeptide at 231–253 (SMVFFSSPPVILLISFLIFLIVG) is removed in mature form.

This sequence belongs to the prion family. Monomer and homodimer. Has a tendency to aggregate into amyloid fibrils containing a cross-beta spine, formed by a steric zipper of superposed beta-strands. Soluble oligomers may represent an intermediate stage on the path to fibril formation. Copper binding may promote oligomerization. Interacts with GRB2, APP, ERI3/PRNPIP and SYN1. Mislocalized cytosolically exposed PrP interacts with MGRN1; this interaction alters MGRN1 subcellular location and causes lysosomal enlargement. Interacts with KIAA1191.

The protein localises to the cell membrane. Its subcellular location is the golgi apparatus. Its primary physiological function is unclear. Has cytoprotective activity against internal or environmental stresses. May play a role in neuronal development and synaptic plasticity. May be required for neuronal myelin sheath maintenance. May play a role in iron uptake and iron homeostasis. Soluble oligomers are toxic to cultured neuroblastoma cells and induce apoptosis (in vitro). Association with GPC1 (via its heparan sulfate chains) targets PRNP to lipid rafts. Also provides Cu(2+) or Zn(2+) for the ascorbate-mediated GPC1 deaminase degradation of its heparan sulfate side chains. The sequence is that of Major prion protein (PRNP) from Trachypithecus francoisi (Francois' leaf monkey).